The sequence spans 214 residues: Ependymin (214 aa).

Positions 1–20 are cleaved as a signal peptide; it reads MHTVKLLCVVFSCLCAVAWA. Residues N70 and N93 are each glycosylated (N-linked (GlcNAc...) asparagine).

Belongs to the ependymin family. In terms of assembly, forms disulfide-linked dimers. Post-translationally, binds calcium through the terminal sialic acids.

Its subcellular location is the secreted. In terms of biological role, may play a role in neural plasticity. May be involved during axon regeneration. In Notemigonus crysoleucas (Golden shiner), this protein is Ependymin (epd).